The primary structure comprises 95 residues: Co-chaperonin GroES (95 aa).

It belongs to the GroES chaperonin family. As to quaternary structure, heptamer of 7 subunits arranged in a ring. Interacts with the chaperonin GroEL.

It localises to the cytoplasm. Functionally, together with the chaperonin GroEL, plays an essential role in assisting protein folding. The GroEL-GroES system forms a nano-cage that allows encapsulation of the non-native substrate proteins and provides a physical environment optimized to promote and accelerate protein folding. GroES binds to the apical surface of the GroEL ring, thereby capping the opening of the GroEL channel. This is Co-chaperonin GroES from Cereibacter sphaeroides (strain ATCC 17025 / ATH 2.4.3) (Rhodobacter sphaeroides).